A 189-amino-acid polypeptide reads, in one-letter code: Protein Rex (189 aa).

A compositionally biased stretch (basic residues) spans 1 to 16 (MPKTRRRPRRSQRKRP). The disordered stretch occupies residues 1-27 (MPKTRRRPRRSQRKRPPTPWPTSQGLD). The Nuclear localization signal, and RNA-binding (RxRE) signature appears at 2–18 (PKTRRRPRRSQRKRPPT). Positions 56–70 (RPAYIVTPYWPPVQS) are homomultimerization. At Ser-70 the chain carries Phosphoserine; by host. The short motif at 82–93 (LSAQLYSSLSLD) is the Nuclear export signal element. Residues 87–189 (YSSLSLDSPP…PPSPGPSCPM (103 aa)) form a disordered region. The span at 105–114 (PLRSLPRQSL) shows a compositional bias: low complexity. The tract at residues 123 to 131 (PSSRPCANT) is homomultimerization. Residues 143 to 164 (LGSTSQPCLFQTPDSGPKTCTP) show a composition bias toward polar residues. Thr-174 carries the phosphothreonine; by host modification. Ser-177 carries the post-translational modification Phosphoserine; by host. The segment covering 178–189 (FPPPSPGPSCPM) has biased composition (pro residues).

The protein belongs to the deltaretrovirus Rex protein family. In terms of assembly, homomultimer. Multimeric assembly is essential for activity and involves XPO1. Binds to human XPO1 and KPNB1. Interacts (via N-terminal nuclear localization signal) with human NPM1. Post-translationally, phosphorylated.

It localises to the host nucleus. It is found in the host nucleolus. The protein resides in the host cytoplasm. Its function is as follows. Rex escorts unspliced gag-pro-pol and singly spliced env mRNAs out of the nucleus of infected cells. These mRNAs carry a recognition sequence called Rex responsive element (RxRE or XRE) located at the 3' region of the long terminal repeat (LTR). This function is essential since most HTLV proteins are translated from unspliced or partially spliced pre-mRNAs that cannot exit the nucleus by the pathway used by fully processed cellular mRNAs. Rex itself is translated from a fully spliced mRNA that probably readily exits the nucleus. Rex's nuclear localization signal (NLS) binds directly to KPNB1/importin beta-1 without previous binding to KPNA1/importin alpha-1. KPNB1 binds to the GDP bound form of RAN (Ran-GDP) and targets Rex to the nucleus. In the nucleus, the conversion from Ran-GDP to Ran-GTP dissociates Rex from KPNB1 and allows Rex's binding to the RRE in viral pre-mRNAs. Rex multimerizes on the RRE via cooperative assembly. This multimerization is critical for its full biological activity, since it may shield the viral RNA from being spliced or down-regulated, and probably exposes Rex's nuclear export signal (NES) to the surface. Rex can then form a complex with XPO1/CRM1, RANBP3 and Ran-GTP, leading to nuclear export of the complex. Conversion from Ran-GTP to Ran-GDP mediates dissociation of the Rex/RRE/XPO1/RANBP3/RAN complex, so that Rex can return to the nucleus for a subsequent round of export. The chain is Protein Rex from Human T-cell leukemia virus 1 (isolate Caribbea HS-35 subtype A) (HTLV-1).